The chain runs to 1956 residues: Sodium channel protein type 10 subunit alpha (1956 aa).

At 1-125 (MELPFASVGT…FNLIRRTAIK (125 aa)) the chain is on the cytoplasmic side. Positions 31-54 (HRAAKKARTKHRGQEDKGEKPRPQ) are disordered. Residues 32–41 (RAAKKARTKH) are compositionally biased toward basic residues. Positions 42 to 54 (RGQEDKGEKPRPQ) are enriched in basic and acidic residues. The stretch at 116–404 (FNLIRRTAIK…VTMAYEEQSQ (289 aa)) is one I repeat. Residues 126-149 (VSVHSWFSIFITITILVNCVCMTR) form a helical membrane-spanning segment. The Extracellular portion of the chain corresponds to 150–154 (TDLPE). A helical membrane pass occupies residues 155 to 174 (KVEYVFTVIYTFEALIKILA). Residues 175 to 187 (RGFCLNEFTYLRD) are Cytoplasmic-facing. A helical membrane pass occupies residues 188 to 206 (PWNWLDFSVITLAYVGAAI). At 207-212 (DLRGIS) the chain is on the extracellular side. Residues 213 to 232 (GLRTFRVLRALKTVSVIPGL) form a helical; Voltage-sensor membrane-spanning segment. The Cytoplasmic portion of the chain corresponds to 233-248 (KVIVGALIHSVRKLAD). Residues 249-272 (VTILTVFCLSVFALVGLQLFKGNL) traverse the membrane as a helical segment. Residues 273–340 (KNKCIRNGTD…PDFNYTSFDS (68 aa)) are Extracellular-facing. An intrachain disulfide couples cysteine 276 to cysteine 318. N-linked (GlcNAc...) asparagine glycans are attached at residues asparagine 279, asparagine 288, asparagine 311, and asparagine 334. An intramembrane region (pore-forming) is located at residues 341–365 (FAWAFLSLFRLMTQDSWERLYQQTL). Residues 366–372 (RASGKMY) are Extracellular-facing. Residues 373 to 398 (MVFFVLVIFLGSFYLVNLILAVVTMA) traverse the membrane as a helical segment. Topologically, residues 399–658 (YEEQSQATIA…KWRKFKMALF (260 aa)) are cytoplasmic. Phosphoserine is present on residues serine 440, serine 443, serine 466, and serine 478. The span at 441-453 (LQSHSGSPLASKN) shows a compositional bias: polar residues. 2 disordered regions span residues 441–484 (LQSH…YNQR) and 537–581 (LLGR…AGAP). A compositionally biased stretch (polar residues) spans 475–484 (SPQSDPYNQR). Phosphoserine is present on residues serine 611 and serine 614. An II repeat occupies 646–910 (CCPKWRKFKM…EDDGEVNNLQ (265 aa)). Residues 659 to 683 (ELVTDPFAELTITLCIVVNTVFMAM) traverse the membrane as a helical segment. Over 684-694 (EHYPMTDAFDA) the chain is Extracellular. Residues 695 to 718 (MLQAGNIVFTVFFTMEMAFKIIAF) form a helical membrane-spanning segment. Topologically, residues 719–726 (DPYYYFQK) are cytoplasmic. Residues 727–746 (KWNIFDCVIVTVSLLELSAS) traverse the membrane as a helical segment. Residues 747–752 (KKGSLS) lie on the Extracellular side of the membrane. Residues 753 to 772 (VLRTFRLLRVFKLAKSWPTL) traverse the membrane as a helical; Voltage-sensor segment. The Cytoplasmic segment spans residues 773–788 (NTLIKIIGNSVGALGN). A helical membrane pass occupies residues 789-809 (LTFILAIIVFIFALVGKQLLS). Topologically, residues 810–833 (EDYGCRKDGVSVWNGEKLRWHMCD) are extracellular. The pore-forming intramembrane region spans 834–854 (FFHSFLVVFRILCGEWIENMW). Residues 855–863 (VCMEVSQKS) are Extracellular-facing. Cysteine 856 and cysteine 865 are disulfide-bonded. Residues 864 to 889 (ICLILFLTVMVLGNLVVLNLFIALLL) traverse the membrane as a helical segment. Over 890 to 1148 (NSFSADNLTA…GWQVRKTCYR (259 aa)) the chain is Cytoplasmic. The segment at 1008-1094 (DELEEDMEQA…SEGSTVDCPD (87 aa)) is disordered. The III repeat unit spans residues 1141-1450 (QVRKTCYRIV…KKYYNAMKKL (310 aa)). The helical transmembrane segment at 1149-1172 (IVEHSWFESFIIFMILLSSGALAF) threads the bilayer. Residues 1173–1185 (EDNYLEEKPRVKS) lie on the Extracellular side of the membrane. A helical membrane pass occupies residues 1186 to 1211 (VLEYTDRVFTFIFVFEMLLKWVAYGF). The Cytoplasmic portion of the chain corresponds to 1212–1217 (KKYFTN). A helical transmembrane segment spans residues 1218–1239 (AWCWLDFLIVNISLTSLIAKIL). The Extracellular segment spans residues 1240-1243 (EYSD). The helical; Voltage-sensor transmembrane segment at 1244–1265 (VASIKALRTLRALRPLRALSRF) threads the bilayer. Over 1266 to 1284 (EGMRVVVDALVGAIPSIMN) the chain is Cytoplasmic. A helical transmembrane segment spans residues 1285–1312 (VLLVCLIFWLIFSIMGVNLFAGKFSKCV). The Extracellular portion of the chain corresponds to 1313–1354 (DTRNNPFSNVNSTMVNNKSECHNQNSTGHFFWVNVKVNFDNV). 3 N-linked (GlcNAc...) asparagine glycosylation sites follow: asparagine 1323, asparagine 1329, and asparagine 1337. The segment at residues 1355–1376 (AMGYLALLQVATFKGWMDIMYA) is an intramembrane region (pore-forming). Residues 1377–1392 (AVDSGEINSQPNWENN) lie on the Extracellular side of the membrane. Residues 1393–1419 (LYMYLYFVVFIIFGGFFTLNLFVGVII) form a helical membrane-spanning segment. The Cytoplasmic portion of the chain corresponds to 1420-1472 (DNFNQQKKKLGGQDIFMTEEQKKYYNAMKKLGSKKPQKPIPRPLNKYQGFVFD). Serine 1452 carries the post-translational modification Phosphoserine; by PKC. One copy of the IV repeat lies at 1459-1758 (IPRPLNKYQG…WEKFDPEATQ (300 aa)). Residues 1473 to 1496 (IVTRQAFDIIIMVLICLNMITMMV) form a helical membrane-spanning segment. Residues 1497-1507 (ETDEQGEEKTK) are Extracellular-facing. The helical transmembrane segment at 1508-1531 (VLGRINQFFVAVFTGECVMKMFAL) threads the bilayer. The Cytoplasmic segment spans residues 1532 to 1537 (RQYYFT). The chain crosses the membrane as a helical span at residues 1538-1561 (NGWNVFDFIVVILSIGSLLFSAIL). The Extracellular segment spans residues 1562–1573 (KSLENYFSPTLF). Residues 1574-1595 (RVIRLARIGRILRLIRAAKGIR) traverse the membrane as a helical; Voltage-sensor segment. Over 1596–1610 (TLLFALMMSLPALFN) the chain is Cytoplasmic. A helical membrane pass occupies residues 1611–1633 (IGLLLFLVMFIYSIFGMASFANV). Residues 1634 to 1647 (VDEAGIDDMFNFKT) lie on the Extracellular side of the membrane. Residues 1648–1670 (FGNSMLCLFQITTSAGWDGLLSP) constitute an intramembrane region (pore-forming). Residues 1671-1698 (ILNTGPPYCDPNLPNSNGSRGNCGSPAV) lie on the Extracellular side of the membrane. An N-linked (GlcNAc...) asparagine glycan is attached at asparagine 1687. A helical membrane pass occupies residues 1699–1723 (GIIFFTTYIIISFLIVVNMYIAVIL). The Cytoplasmic portion of the chain corresponds to 1724–1956 (ENFNVATEES…AKEGNSPGPQ (233 aa)). Residues 1852–1881 (EDLSATVIQKAYRSYMLHRSLTLSNTLHVP) form the IQ domain. Residues 1906–1956 (DKSETASATSFPPSYDSVTRGLSDRANINPSSSMQNEDEVAAKEGNSPGPQ) form a disordered region. Positions 1931–1940 (ANINPSSSMQ) are enriched in polar residues.

It belongs to the sodium channel (TC 1.A.1.10) family. Nav1.8/SCN10A subfamily. In terms of assembly, the channel consists of an ion conducting pore forming alpha-subunit regulated by one or more associated auxiliary subunits SCN1B, SCN2B and SCN3B; electrophysiological properties may vary depending on the type of the associated beta subunits. Found in a number of complexes with PRX, DYNLT1 and PDZD2. Interacts with proteins such as FSTL1, PRX, DYNLT1, PDZD2, S100A10 and many others. Interacts with NEDD4 and NEDD4L. Ubiquitinated by NEDD4L; which promotes its endocytosis. Post-translationally, phosphorylation at Ser-1452 by PKC in a highly conserved cytoplasmic loop slows inactivation of the sodium channel and reduces peak sodium currents. In terms of processing, lacks the cysteine which covalently binds the conotoxin GVIIJ. This cysteine (position 815) is speculated in other sodium channel subunits alpha to be implied in covalent binding with the sodium channel subunit beta-2 or beta-4. In terms of tissue distribution, expressed in dorsal root ganglia, trigeminal ganglia, nodose ganglia and sciatic nerve.

The protein resides in the cell membrane. It carries out the reaction Na(+)(in) = Na(+)(out). Its function is as follows. Tetrodotoxin-resistant channel that mediates the voltage-dependent sodium ion permeability of excitable membranes. Assuming opened or closed conformations in response to the voltage difference across the membrane, the protein forms a sodium-selective channel through which sodium ions may pass in accordance with their electrochemical gradient. Plays a role in neuropathic pain mechanisms. This is Sodium channel protein type 10 subunit alpha from Rattus norvegicus (Rat).